The chain runs to 887 residues: Transportin-2 (887 aa).

HEAT repeat units lie at residues 9–36 (GLQQ…DKLK), 41–79 (FPDF…AHYQ), 88–121 (FIKQ…KGEL), 127–164 (LLPQ…LDSD), 171–201 (NIMI…QFIM), 214–241 (FIEH…VMLL), 253–280 (HSII…FWLT), 296–386 (VQLI…LANV), 394–422 (HLLP…GAIA), 434–461 (PELI…TLSR), 475–508 (LKPL…EEEA), 516–549 (LSYI…ADSV), 557–595 (EYIQ…TALQ), 603–654 (EPVY…GLGG), 665–696 (IMTL…KACF), 704–737 (AEFM…MQMG), 745–780 (QMVL…YVCP), 788–821 (QQFI…IGVN), 830–861 (IFFC…KDQV), and 864–884 (ENWQ…LAAF). An Importin N-terminal domain is found at 31–99 (VQDKLKQLNQ…KQECLNNIGD (69 aa)). Positions 344-363 (TLTHEAERPDSSEDAEDDDD) are disordered. Lys-852 carries the N6-acetyllysine modification.

This sequence belongs to the importin beta family. Importin beta-2 subfamily.

It is found in the cytoplasm. The protein localises to the nucleus. Functionally, probably functions in nuclear protein import as nuclear transport receptor. Serves as receptor for nuclear localization signals (NLS) in cargo substrates. Is thought to mediate docking of the importin/substrate complex to the nuclear pore complex (NPC) through binding to nucleoporin and the complex is subsequently translocated through the pore by an energy requiring, Ran-dependent mechanism. At the nucleoplasmic side of the NPC, Ran binds to the importin, the importin/substrate complex dissociates and importin is re-exported from the nucleus to the cytoplasm where GTP hydrolysis releases Ran. The directionality of nuclear import is thought to be conferred by an asymmetric distribution of the GTP- and GDP-bound forms of Ran between the cytoplasm and nucleus. The sequence is that of Transportin-2 (Tnpo2) from Mus musculus (Mouse).